The following is a 319-amino-acid chain: Peroxidase 13 (319 aa).

The signal sequence occupies residues 1 to 22 (MITIALFLVLLYFHDQLGYSAA). Intrachain disulfides connect cysteine 33–cysteine 111, cysteine 66–cysteine 71, cysteine 117–cysteine 315, and cysteine 196–cysteine 222. Histidine 64 acts as the Proton acceptor in catalysis. Residues aspartate 65, valine 68, glycine 70, aspartate 72, and serine 74 each coordinate Ca(2+). Proline 158 is a substrate binding site. Histidine 189 provides a ligand contact to heme b. Residue threonine 190 participates in Ca(2+) binding. Ca(2+) contacts are provided by aspartate 235, serine 238, and aspartate 243. An N-linked (GlcNAc...) asparagine glycan is attached at asparagine 280.

The protein belongs to the peroxidase family. Classical plant (class III) peroxidase subfamily. Requires heme b as cofactor. Ca(2+) is required as a cofactor.

It localises to the secreted. The enzyme catalyses 2 a phenolic donor + H2O2 = 2 a phenolic radical donor + 2 H2O. Removal of H(2)O(2), oxidation of toxic reductants, biosynthesis and degradation of lignin, suberization, auxin catabolism, response to environmental stresses such as wounding, pathogen attack and oxidative stress. These functions might be dependent on each isozyme/isoform in each plant tissue. The polypeptide is Peroxidase 13 (PER13) (Arabidopsis thaliana (Mouse-ear cress)).